The chain runs to 605 residues: F-box/WD repeat-containing protein pof1 (605 aa).

The F-box domain maps to leucine 107–methionine 153. Residues glycine 195–aspartate 212 show a composition bias toward basic and acidic residues. A disordered region spans residues glycine 195–asparagine 231. Polar residues predominate over residues proline 214–asparagine 231. Serine 229 and serine 232 each carry phosphoserine. WD repeat units follow at residues glycine 271–asparagine 299, glycine 311–asparagine 339, histidine 350–histidine 379, glycine 390–serine 420, alanine 432–aspartate 460, glycine 472–glutamate 500, and asparagine 510–leucine 538.

As to quaternary structure, a part of the E3 ubiquitin ligase Skp1-Cullin-1-F-box (SCF) complex. Interacts with cul1, skp1 and phosphorylated zip1.

The protein localises to the nucleus. Functionally, probably recognizes and binds to some phosphorylated proteins and promotes their ubiquitination and degradation. Required for the inactivation of zip1 via ubiquitination. This is F-box/WD repeat-containing protein pof1 (pof1) from Schizosaccharomyces pombe (strain 972 / ATCC 24843) (Fission yeast).